Consider the following 131-residue polypeptide: Small ribosomal subunit protein bS6 (131 aa).

The interval 100–131 (SPMVKAKDERRERREDFANETSDDADAGDSEE) is disordered. The segment covering 104–116 (KAKDERRERREDF) has biased composition (basic and acidic residues). Over residues 120–131 (TSDDADAGDSEE) the composition is skewed to acidic residues.

Belongs to the bacterial ribosomal protein bS6 family.

Functionally, binds together with bS18 to 16S ribosomal RNA. In Erwinia tasmaniensis (strain DSM 17950 / CFBP 7177 / CIP 109463 / NCPPB 4357 / Et1/99), this protein is Small ribosomal subunit protein bS6.